The sequence spans 381 residues: tRNA pseudouridine synthase D (381 aa).

Asp81 functions as the Nucleophile in the catalytic mechanism. Positions 160–335 (GMPNYFGSQR…TLGSRRFFWV (176 aa)) constitute a TRUD domain.

It belongs to the pseudouridine synthase TruD family.

The enzyme catalyses uridine(13) in tRNA = pseudouridine(13) in tRNA. In terms of biological role, responsible for synthesis of pseudouridine from uracil-13 in transfer RNAs. The polypeptide is tRNA pseudouridine synthase D (Helicobacter acinonychis (strain Sheeba)).